Consider the following 623-residue polypeptide: Trehalase (623 aa).

This sequence belongs to the glycosyl hydrolase 15 family. In terms of assembly, monomer.

The enzyme catalyses alpha,alpha-trehalose + H2O = alpha-D-glucose + beta-D-glucose. Its pathway is glycan degradation; trehalose degradation; D-glucose from alpha,alpha-trehalose: step 1/1. Inhibited by validamycin A. In terms of biological role, catalyzes the hydrolysis of alpha,alpha-trehalose into two molecules of D-glucose. The polypeptide is Trehalase (Thermoplasma volcanium (strain ATCC 51530 / DSM 4299 / JCM 9571 / NBRC 15438 / GSS1)).